The chain runs to 708 residues: Lactotransferrin (708 aa).

An N-terminal signal peptide occupies residues 1–19 (MKLFVPALLSLGALGLCLA). 2 consecutive Transferrin-like domains span residues 25–352 (VRWC…NLRE) and 364–693 (VVWC…NLKK). Intrachain disulfides connect cysteine 28/cysteine 64 and cysteine 38/cysteine 55. Aspartate 79 contacts Fe cation. Residue lysine 92 is part of the active site. Tyrosine 111 is a binding site for Fe cation. Disulfide bonds link cysteine 134–cysteine 217, cysteine 176–cysteine 192, cysteine 179–cysteine 202, cysteine 189–cysteine 200, and cysteine 250–cysteine 264. Positions 136, 140, 142, and 143 each coordinate hydrogencarbonate. Tyrosine 211 lines the Fe cation pocket. N-linked (GlcNAc...) (high mannose) asparagine glycosylation is present at asparagine 252. Histidine 272 provides a ligand contact to Fe cation. Serine 278 functions as the Nucleophile in the catalytic mechanism. Residue asparagine 300 is glycosylated (N-linked (GlcNAc...) (hybrid) asparagine). 2 cysteine pairs are disulfide-bonded: cysteine 367/cysteine 399 and cysteine 377/cysteine 390. Positions 414 and 452 each coordinate Fe cation. Cystine bridges form between cysteine 424–cysteine 703, cysteine 444–cysteine 666, cysteine 476–cysteine 551, cysteine 500–cysteine 694, cysteine 510–cysteine 524, cysteine 521–cysteine 534, cysteine 592–cysteine 606, and cysteine 644–cysteine 649. Threonine 478, arginine 482, alanine 484, and glycine 485 together coordinate hydrogencarbonate. N-linked (GlcNAc...) (complex) asparagine; alternate glycosylation occurs at asparagine 495. Asparagine 495 carries an N-linked (GlcNAc...) (high mannose) asparagine; alternate glycan. Asparagine 495 carries an N-linked (GlcNAc...) (hybrid) asparagine; alternate glycan. Fe cation is bound at residue tyrosine 545. Asparagine 564 carries N-linked (GlcNAc...) (high mannose) asparagine glycosylation. Residue histidine 614 coordinates Fe cation.

It belongs to the transferrin family. As to quaternary structure, monomer. Found in a complex with LTF, CLU, EPPIN and SEMG1. Found in a complex with MPO and LTF; interacts directly with CP, allows Fe(3+) incorporation into LTF and activation of CP ferroxidase activity. Poly-N-acetyllactosaminic carbohydrate moiety seems to be needed for TLR4 activation.

It is found in the secreted. The protein resides in the cytoplasmic granule. In terms of biological role, transferrins are iron binding transport proteins which can bind two Fe(3+) ions in association with the binding of an anion, usually bicarbonate. Major iron-binding and multifunctional protein found in exocrine fluids such as breast milk and mucosal secretions. Has antimicrobial activity, which depends on the extracellular cation concentration. Antimicrobial properties include bacteriostasis, which is related to its ability to sequester free iron and thus inhibit microbial growth, as well as direct bactericidal properties leading to the release of lipopolysaccharides from the bacterial outer membrane. Can also prevent bacterial biofilm development in P.aeruginosa infection. Has weak antifungal activity against C.albicans. Has anabolic, differentiating and anti-apoptotic effects on osteoblasts and can also inhibit osteoclastogenesis, possibly playing a role in the regulation of bone growth. Promotes binding of species C adenoviruses to epithelial cells, promoting adenovirus infection. Can inhibit papillomavirus infections. Stimulates the TLR4 signaling pathway leading to NF-kappa-B activation and subsequent pro-inflammatory cytokine production while also interfering with the lipopolysaccharide (LPS)-stimulated TLR4 signaling. Inhibits neutrophil granulocyte migration to sites of apoptosis, when secreted by apoptotic cells. Stimulates VEGFA-mediated endothelial cell migration and proliferation. Binds heparin, chondroitin sulfate and possibly other glycosaminoglycans (GAGs). Also binds specifically to pneumococcal surface protein A (PspA), the lipid A portion of bacterial lipopolysaccharide (LPS), lysozyme and DNA. Its function is as follows. Lactoferricin binds to the bacterial surface and is crucial for the bactericidal functions. Has some antiviral activity against papillomavirus infection. N-terminal region shows strong antifungal activity against C.albicans. Contains two BBXB heparin-binding consensus sequences that appear to form the predominate functional GAG-binding site. Functionally, the lactotransferrin transferrin-like domain 1 functions as a serine protease of the peptidase S60 family that cuts arginine rich regions. This function contributes to the antimicrobial activity. Shows a preferential cleavage at -Arg-Ser-Arg-Arg-|- and -Arg-Arg-Ser-Arg-|-, and of Z-Phe-Arg-|-aminomethylcoumarin sites. This is Lactotransferrin (LTF) from Bubalus bubalis (Domestic water buffalo).